Reading from the N-terminus, the 297-residue chain is Small ribosomal subunit protein uS2 (297 aa).

The disordered stretch occupies residues 252–297; sequence GVPGTAFSAATAAPTSWEADGGDWAASSAAPAGESWAETQPAEAKW. Low complexity predominate over residues 256–289; it reads TAFSAATAAPTSWEADGGDWAASSAAPAGESWAE.

This sequence belongs to the universal ribosomal protein uS2 family. Component of the small ribosomal subunit. Mature ribosomes consist of a small (40S) and a large (60S) subunit. The 40S subunit contains about 33 different proteins and 1 molecule of RNA (18S). The 60S subunit contains about 49 different proteins and 3 molecules of RNA (25S, 5.8S and 5S). Interacts with rps21.

Its subcellular location is the cytoplasm. Its function is as follows. Required for the assembly and/or stability of the 40S ribosomal subunit. Required for the processing of the 20S rRNA-precursor to mature 18S rRNA in a late step of the maturation of 40S ribosomal subunits. This chain is Small ribosomal subunit protein uS2 (rps0), found in Aspergillus fumigatus (strain CBS 144.89 / FGSC A1163 / CEA10) (Neosartorya fumigata).